A 183-amino-acid chain; its full sequence is 2-hydroxy-1,4-benzoquinone reductase (183 aa).

FMN contacts are provided by residues 11 to 18, 77 to 80, and Ser-113; these read SLRRDSFN and EYNR.

This sequence belongs to the SsuE family. In terms of assembly, homotetramer. FMN serves as cofactor.

The catalysed reaction is 2-hydroxy-1,4-benzoquinone + NADH + 2 H(+) = benzene-1,2,4-triol + NAD(+). Involved in the metabolism of 4-aminophenol. Catalyzes the reduction of the auto-oxidation product 2-hydroxy-1,4-benzoquinone back to hydroxyquinol. Has a broad substrate specificity toward benzoquinones, converting them to the corresponding 1,4-benzenediols. This chain is 2-hydroxy-1,4-benzoquinone reductase, found in Burkholderia sp.